The primary structure comprises 322 residues: MMIKNKKKLLFLCLLVILIATAYISFVTGTIKLSFNDLFTKFTTGSNEAVDSIIDLRLPRILIALMVGAMLAVSGALLQAALQNPLAEANIIGVSSGALIMRALCMLFIPQLYFYLPLLSFIGGLIPFLIIIVLHSKFRFNAVSMILVGVALFVLLNGVLEILTQNPLMKIPQGLTMKIWSDVYILAVSALLGLILTLLLSLKLNLLNLDDVQARSIGFNIDRYRWLTGLLAVFLASATVAIVGQLAFLGIIVPHVVRKLVGGNYRVLIPFSTVIGAWLLLVADLLGRVIQPPLEIPANAILMIVGGPMLIYLICQSQRNRI.

Transmembrane regions (helical) follow at residues Leu-9–Gly-29, Ile-61–Ala-81, Ala-89–Ile-109, Phe-114–Leu-134, Val-143–Leu-163, Ile-179–Leu-199, Val-233–Val-253, Val-267–Gly-287, and Leu-294–Ile-314.

The protein belongs to the binding-protein-dependent transport system permease family. FecCD subfamily.

The protein resides in the cell membrane. In terms of biological role, part of the binding-protein-dependent transport system for heme-iron. Responsible for the translocation of the substrate across the membrane. The chain is Probable heme-iron transport system permease protein IsdF (isdF) from Staphylococcus aureus (strain bovine RF122 / ET3-1).